The sequence spans 600 residues: Proline--tRNA ligase (600 aa).

Belongs to the class-II aminoacyl-tRNA synthetase family. ProS type 1 subfamily. Homodimer.

It localises to the cytoplasm. The enzyme catalyses tRNA(Pro) + L-proline + ATP = L-prolyl-tRNA(Pro) + AMP + diphosphate. Functionally, catalyzes the attachment of proline to tRNA(Pro) in a two-step reaction: proline is first activated by ATP to form Pro-AMP and then transferred to the acceptor end of tRNA(Pro). As ProRS can inadvertently accommodate and process non-cognate amino acids such as alanine and cysteine, to avoid such errors it has two additional distinct editing activities against alanine. One activity is designated as 'pretransfer' editing and involves the tRNA(Pro)-independent hydrolysis of activated Ala-AMP. The other activity is designated 'posttransfer' editing and involves deacylation of mischarged Ala-tRNA(Pro). The misacylated Cys-tRNA(Pro) is not edited by ProRS. The sequence is that of Proline--tRNA ligase from Prochlorococcus marinus (strain MIT 9211).